We begin with the raw amino-acid sequence, 355 residues long: Uroporphyrinogen decarboxylase (355 aa).

Substrate-binding positions include R27–R31, D77, Y154, T209, and H327.

This sequence belongs to the uroporphyrinogen decarboxylase family. In terms of assembly, homodimer.

The protein resides in the cytoplasm. It catalyses the reaction uroporphyrinogen III + 4 H(+) = coproporphyrinogen III + 4 CO2. Its pathway is porphyrin-containing compound metabolism; protoporphyrin-IX biosynthesis; coproporphyrinogen-III from 5-aminolevulinate: step 4/4. Catalyzes the decarboxylation of four acetate groups of uroporphyrinogen-III to yield coproporphyrinogen-III. This chain is Uroporphyrinogen decarboxylase, found in Yersinia pseudotuberculosis serotype O:1b (strain IP 31758).